The sequence spans 308 residues: Bacitracin transport ATP-binding protein BcrA (308 aa).

Residues 8-236 (IETENLTKQY…NRKYTEFDVS (229 aa)) form the ABC transporter domain. 40–47 (GRNGAGKT) provides a ligand contact to ATP.

The protein belongs to the ABC transporter superfamily. As to quaternary structure, the complex is probably composed of two ATP-binding proteins (BcrA) and two transmembrane proteins (BcrB).

Essential for high-level bacitracin resistance. Part of the ABC transporter complex BcrAB. Probably responsible for energy coupling to the transport system. In Enterococcus faecalis (Streptococcus faecalis), this protein is Bacitracin transport ATP-binding protein BcrA.